We begin with the raw amino-acid sequence, 381 residues long: 8-amino-7-oxononanoate synthase (381 aa).

Arginine 27 is a substrate binding site. A pyridoxal 5'-phosphate-binding site is contributed by 105-106 (GY). Residue histidine 130 coordinates substrate. Pyridoxal 5'-phosphate is bound by residues serine 176, 201-204 (DEAH), and 232-235 (TLSK). Lysine 235 carries the post-translational modification N6-(pyridoxal phosphate)lysine. Threonine 345 contacts substrate.

This sequence belongs to the class-II pyridoxal-phosphate-dependent aminotransferase family. BioF subfamily. Homodimer. Pyridoxal 5'-phosphate serves as cofactor.

The enzyme catalyses 6-carboxyhexanoyl-[ACP] + L-alanine + H(+) = (8S)-8-amino-7-oxononanoate + holo-[ACP] + CO2. The protein operates within cofactor biosynthesis; biotin biosynthesis. Catalyzes the decarboxylative condensation of pimeloyl-[acyl-carrier protein] and L-alanine to produce 8-amino-7-oxononanoate (AON), [acyl-carrier protein], and carbon dioxide. The polypeptide is 8-amino-7-oxononanoate synthase (Mycolicibacterium paratuberculosis (strain ATCC BAA-968 / K-10) (Mycobacterium paratuberculosis)).